The following is an 859-amino-acid chain: MDINQDLPAIDSHRALQIWITENLKMLPLPERAHGNFFEECCYVVLHVPQSPKATQGGSSDLHYWIGKDASAEAREAAVSFVQCLQEDLGDQTVLHRESQGHESDCFHSYFHPGVIYRKGGRDSALKFAETNMYNVQRLLHIKGRKHVSATEVALSWNSFNKGDIFLLDLGKVMIQWNGPKASISEKARALTLTCNLRDRERGGRAQIAVVDAENEATNLLRIMEAVLGCRSGSLCPSVPSNSVSQLQKANVRLYHVCEKGTDLVVQELATRPLTQDLLQEDGCYLLDQGGFKIYMWQGRKSSPQEKKAALSRAVGFIQAKGYPNYTNVEVVNDGAESTAFQQLFWSWSKELDRKKHPEKSKLVQGNLEVGKLHTQPELAAQLRMVDDGSGKVEVWYIQDLQRQPVHPKYYGQLCSGNCYLVLYTYQKLGCVQYLLYLWQGHQSTVEDTKALNCSAEELDLMHQGALAQGHVTMGSEPPHFLAIFQGRLVVFQGNAGNKGERPPVSDTRLFHVQGTESHNTRTMEVPARASSLTSGDVFFLITSHVCYLWFGKGCHGDQREMARTVVSVFPGNNKETVLEGQEPLYFWEALGGRAPYPSNKRLPEEVWSIQPRLFECSSHAGCLVLTEVLFFGQEDLDKYDIMLLDTCQEIFLWLGEAAGEWKKEAVAWGLEYLRTHPAERSLATPIFVVKQGHEPATFTGWFVTWDPYKWMNSQSYEEMVGNSLGPGSAISEMTAEVHNFQLTPRLSDNKAGHPALQAFKGSQDSPENELGLDLRVDGANPSMNHTSSCSDSMVNGSLPRERLMHQALEDLPPGVDPARKEFYLSDSDFQDIFGKSKEEFYSMAKWKQQQAKKKLGFF.

Gelsolin-like repeat units lie at residues 24 to 76 (LKML…EARE), 148 to 188 (VSAT…SEKA), 264 to 308 (LVVQ…QEKK), 401 to 450 (LQRQ…EDTK), 521 to 561 (TRTM…DQRE), and 624 to 665 (LVLT…WKKE). The 67-residue stretch at 793 to 859 (SMVNGSLPRE…QQAKKKLGFF (67 aa)) folds into the HP domain.

It belongs to the villin/gelsolin family.

Possible tumor suppressor. The sequence is that of Villin-like protein from Mus musculus (Mouse).